The primary structure comprises 396 residues: MVDFGALPPEINSARMYAGPGSASLVAAAKMWDSVASDLFSAASAFQSVVWGLTTGSWIGSSAGLMVAAASPYVAWMSVTAGQAELTAAQVRVAAAAYETAYGLTVPPPVIAENRAELMILIATNLLGQNTPAIAVNEAEYGEMWAQDAAAMFGYAAATATATEALLPFEDAPLITNPGGLLEQAVAVEEAIDTAAANQLMNNVPQALQQLAQPTKSIWPFDQLSELWKAISPHLSPLSNIVSMLNNHVSMTNSGVSMASTLHSMLKGFAPAAAQAVETAAQNGVQAMSSLGSQLGSSLGSSGLGAGVAANLGRAASVGSLSVPQAWAAANQAVTPAARALPLTSLTSAAQTAPGHMLGGLPLGQLTNSGGGFGGVSNALRMPPRAYVMPRVPAAG.

This sequence belongs to the mycobacterial PPE family.

This is an uncharacterized protein from Mycobacterium tuberculosis (strain CDC 1551 / Oshkosh).